We begin with the raw amino-acid sequence, 1077 residues long: Insulin receptor substrate 2-B (1077 aa).

Positions 1 to 66 (MAGVLCPTEE…APASTAEDDV (66 aa)) are disordered. 2 consecutive short sequence motifs (YXXM motif) follow at residues 33-36 (YRRM) and 147-150 (YFAM). The region spanning 65-170 (DVRKRGYLRK…WYQALSELIN (106 aa)) is the PH domain. The region spanning 195 to 299 (FKEVWQVNVK…DTMKALKAYS (105 aa)) is the IRS-type PTB domain. Disordered regions lie at residues 342 to 373 (ETVV…RPFR), 428 to 464 (VCSS…SDEY), and 476 to 495 (VRSN…EENT). Polar residues-rich tracts occupy residues 350–364 (SAKN…SSEG) and 428–444 (VCSS…LTRP). The span at 445 to 457 (SSSSVCGSPSDGG) shows a compositional bias: low complexity. Polar residues predominate over residues 477–495 (RSNTPDSLGNTPPIQEENT). Residues 499–502 (YMSM) carry the YXXM motif 3 motif. Positions 530–544 (KPTNAASQQKSQTAV) are enriched in polar residues. The segment at 530-571 (KPTNAASQQKSQTAVSLDEDSEETNKQFAYAESPKLKDSSHV) is disordered. 6 consecutive short sequence motifs (YXXM motif) follow at residues 595–598 (YMPM), 608–611 (YLPM), 634–637 (YMMM), 666–669 (YMDM), 713–716 (YVPM), and 891–894 (YTTM).

Post-translationally, phosphorylated by INSR.

Functionally, potentiates insulin signaling. The protein is Insulin receptor substrate 2-B (irs2-b) of Xenopus laevis (African clawed frog).